A 766-amino-acid chain; its full sequence is Probable beta-glucosidase K (766 aa).

N-linked (GlcNAc...) asparagine glycosylation occurs at Asn19. Residue Asp196 is part of the active site. Residues Asn288, Asn453, and Asn748 are each glycosylated (N-linked (GlcNAc...) asparagine). Residues 369–528 form the PA14 domain; sequence EGQPGLGMRF…DPERAIARAV (160 aa). Residues 726 to 766 are disordered; the sequence is LGRRGRSGSSPAVYRGRSNNVVNRTSHQGAQRISKGGFAAR. Residues 742 to 756 show a composition bias toward polar residues; sequence RSNNVVNRTSHQGAQ.

It belongs to the glycosyl hydrolase 3 family.

The protein resides in the secreted. It catalyses the reaction Hydrolysis of terminal, non-reducing beta-D-glucosyl residues with release of beta-D-glucose.. The protein operates within glycan metabolism; cellulose degradation. In terms of biological role, beta-glucosidases are one of a number of cellulolytic enzymes involved in the degradation of cellulosic biomass. Catalyzes the last step releasing glucose from the inhibitory cellobiose. This Aspergillus fumigatus (strain CBS 144.89 / FGSC A1163 / CEA10) (Neosartorya fumigata) protein is Probable beta-glucosidase K (bglK).